Here is a 234-residue protein sequence, read N- to C-terminus: Phosphatidylcholine synthase (234 aa).

Residues 1-3 (MKN) lie on the Cytoplasmic side of the membrane. A helical membrane pass occupies residues 4–24 (INLILAWLVHIFTASGLIVGL). The Periplasmic portion of the chain corresponds to 25 to 26 (YS). Residues 27-47 (IISIVNGNYSLLLKLTVIGLI) form a helical membrane-spanning segment. Residues 48-75 (IDGIDGTMARKLKVKELIPEIDGTLLDN) are Cytoplasmic-facing. A helical membrane pass occupies residues 76-96 (ITDYINYTFIPVIFFYLGEFI). The Periplasmic segment spans residues 97 to 98 (EE). A helical membrane pass occupies residues 99–116 (KYKVAICIGILLSSAYQF). Residues 117-126 (SRTDAKTNDN) are Cytoplasmic-facing. Residues 127–147 (YFRGFPSLWNLFVILNIIFKM) traverse the membrane as a helical segment. The Periplasmic portion of the chain corresponds to 148 to 149 (EQ). Residues 150 to 170 (ITNLITMSICIITSFIPIKFI) traverse the membrane as a helical segment. Residues 171 to 180 (YPSKTKELRK) are Cytoplasmic-facing. A helical transmembrane segment spans residues 181 to 201 (ITIPITIISCLIFVVSIFSEL). Residues 202–207 (STTALK) are Periplasmic-facing. Residues 208-228 (MAKTVLILYFAYLTLASIYLT) form a helical membrane-spanning segment. Residues 229-234 (YKTRNR) lie on the Cytoplasmic side of the membrane.

It belongs to the CDP-alcohol phosphatidyltransferase class-I family. Mn(2+) is required as a cofactor.

The protein resides in the cell inner membrane. The catalysed reaction is a CDP-1,2-diacyl-sn-glycerol + choline = a 1,2-diacyl-sn-glycero-3-phosphocholine + CMP + H(+). Its function is as follows. Condenses choline with CDP-diglyceride to produce phosphatidylcholine and CMP. The protein is Phosphatidylcholine synthase of Borreliella burgdorferi (strain ATCC 35210 / DSM 4680 / CIP 102532 / B31) (Borrelia burgdorferi).